The sequence spans 344 residues: 3-isopropylmalate dehydrogenase (344 aa).

74–87 contributes to the NAD(+) binding site; the sequence is GPKWDALPRKIRPE. Substrate contacts are provided by Arg94, Arg104, Arg132, and Asp217. 3 residues coordinate Mg(2+): Asp217, Asp241, and Asp245. 274–286 contacts NAD(+); that stretch reads GSAPDIAGKGIAN.

This sequence belongs to the isocitrate and isopropylmalate dehydrogenases family. LeuB type 1 subfamily. As to quaternary structure, homodimer. The cofactor is Mg(2+). Mn(2+) is required as a cofactor.

Its subcellular location is the cytoplasm. The catalysed reaction is (2R,3S)-3-isopropylmalate + NAD(+) = 4-methyl-2-oxopentanoate + CO2 + NADH. It participates in amino-acid biosynthesis; L-leucine biosynthesis; L-leucine from 3-methyl-2-oxobutanoate: step 3/4. Functionally, catalyzes the oxidation of 3-carboxy-2-hydroxy-4-methylpentanoate (3-isopropylmalate) to 3-carboxy-4-methyl-2-oxopentanoate. The product decarboxylates to 4-methyl-2 oxopentanoate. The polypeptide is 3-isopropylmalate dehydrogenase (leuB) (Thermus aquaticus).